Here is a 342-residue protein sequence, read N- to C-terminus: Phomopsin biosynthesis cluster protein B' (342 aa).

The disordered stretch occupies residues 1 to 22 (MESIAKAKSLPNKGRTYDSQRP). The helical transmembrane segment at 87–107 (VLIIGCAVISLFAIIGALGFA) threads the bilayer. The interval 118–186 (CASPAHQNPH…QCGESPDEAQ (69 aa)) is disordered. The segment covering 144-155 (HSGSHSSSSSTN) has biased composition (low complexity). Residue asparagine 248 is glycosylated (N-linked (GlcNAc...) asparagine).

Its subcellular location is the membrane. In terms of biological role, part of the gene cluster that mediates the biosynthesis of the phomopsins, a group of hexapeptide mycotoxins which infects lupins and causes lupinosis disease in livestock. The role of phomB' within the phomopsins biosynthesis pathway has still to be determined. The pathway starts with the processing of the precursor phomA by several endopeptidases including kexin proteases as well as the cluster-specific S41 family peptidase phomP1 and the oligopeptidase phomG to produce 10 identical copies of the hexapeptide Tyr-Val-Ile-Pro-Ile-Asp. After being excised from the precursor peptide, the core peptides are cyclized and modified post-translationally by enzymes encoded within the gene cluster. The timing and order of proteolysis of the phomA precursor and PTMs are still unknown. Two tyrosinase-like enzymes, phomQ1 and phomQ2, catalyze the chlorination and hydroxylation of Tyr, respectively. PhomYb, is proposed to be involved in the construction of the macrocyclic structure. The other 4 ustYa family proteins may be involved in PTMs that generate the unique structure of phomopsin A. PhomYa is required for the hydroxylation of C-beta of Tyr. PhomYc, phomYd, and phomYe are responsible for the biosynthesis of 2,3-dehydroisoleucine (dIle), 2,3-dehydroaspartic acid (dAsp), and 3,4-dehydroproline (dPro), respectively. While dIle formation by phomYc is indispensable for the installation of dAsp by phomYd, the order of the other PTMs have not been elucidated yet. Most of the biosynthetic enzymes likely have broad substrate specificity, and thus, there might be a metabolic grid from a precursor to phomopsin A. The enzyme(s) responsible for the biosynthesis of 3,4-dehydrovaline (dVal) have also not been identified yet. Finally, phomM acts as an S-adenosylmethionine-dependent alpha-N-methyltransferase that catalyzes two successive N-methylation reactions, converting N-desmethyl-phomopsin A to phomopsin A and phomopsin A further to an N,N-dimethylated congener called phomopsin E. This Diaporthe leptostromiformis (Lupinosis disease fungus) protein is Phomopsin biosynthesis cluster protein B'.